Consider the following 429-residue polypeptide: Enolase (429 aa).

Residue Gln-162 participates in (2R)-2-phosphoglycerate binding. Glu-204 functions as the Proton donor in the catalytic mechanism. Residues Asp-241, Glu-288, and Asp-315 each coordinate Mg(2+). Residues Lys-340, Arg-369, Ser-370, and Lys-391 each coordinate (2R)-2-phosphoglycerate. Residue Lys-340 is the Proton acceptor of the active site.

It belongs to the enolase family. It depends on Mg(2+) as a cofactor.

The protein resides in the cytoplasm. It localises to the secreted. It is found in the cell surface. The catalysed reaction is (2R)-2-phosphoglycerate = phosphoenolpyruvate + H2O. It participates in carbohydrate degradation; glycolysis; pyruvate from D-glyceraldehyde 3-phosphate: step 4/5. Catalyzes the reversible conversion of 2-phosphoglycerate (2-PG) into phosphoenolpyruvate (PEP). It is essential for the degradation of carbohydrates via glycolysis. The polypeptide is Enolase (Bacteroides fragilis (strain ATCC 25285 / DSM 2151 / CCUG 4856 / JCM 11019 / LMG 10263 / NCTC 9343 / Onslow / VPI 2553 / EN-2)).